A 269-amino-acid polypeptide reads, in one-letter code: Phosphatidylglycerol--prolipoprotein diacylglyceryl transferase (269 aa).

7 consecutive transmembrane segments (helical) span residues 17-37 (LKIH…WLLA), 56-76 (LVFW…VLFY), 92-112 (WKGG…ALWF), 120-140 (FFEL…AGRI), 174-194 (PSQL…LWLY), 202-222 (MAVS…VEFV), and 237-257 (LTMG…LIWL). R139 serves as a coordination point for a 1,2-diacyl-sn-glycero-3-phospho-(1'-sn-glycerol).

Belongs to the Lgt family.

The protein localises to the cell inner membrane. It catalyses the reaction L-cysteinyl-[prolipoprotein] + a 1,2-diacyl-sn-glycero-3-phospho-(1'-sn-glycerol) = an S-1,2-diacyl-sn-glyceryl-L-cysteinyl-[prolipoprotein] + sn-glycerol 1-phosphate + H(+). Its pathway is protein modification; lipoprotein biosynthesis (diacylglyceryl transfer). Catalyzes the transfer of the diacylglyceryl group from phosphatidylglycerol to the sulfhydryl group of the N-terminal cysteine of a prolipoprotein, the first step in the formation of mature lipoproteins. This Pseudomonas putida (strain W619) protein is Phosphatidylglycerol--prolipoprotein diacylglyceryl transferase.